Reading from the N-terminus, the 33-residue chain is Pardaxin P-3 (33 aa).

The protein belongs to the pardaxin family. As to quaternary structure, in aqueous solution exists as a tetramer.

It is found in the secreted. Its subcellular location is the target cell membrane. Exhibits unusual shark repellent and surfactant properties. Forms voltage-dependent, ion-permeable channels in membranes. At high concentration causes cell membrane lysis. This Pardachirus pavoninus (Peacock sole) protein is Pardaxin P-3.